A 116-amino-acid chain; its full sequence is Dynein light chain Tctex-type 3 (116 aa).

Tyrosine 4 bears the 3'-nitrotyrosine mark.

This sequence belongs to the dynein light chain Tctex-type family. As to quaternary structure, homodimer. The cytoplasmic dynein 1 complex consists of two catalytic heavy chains (HCs) and a number of non-catalytic subunits presented by intermediate chains (ICs), light intermediate chains (LICs) and light chains (LCs); the composition seems to vary in respect to the IC, LIC and LC composition. The heavy chain homodimer serves as a scaffold for the probable homodimeric assembly of the respective non-catalytic subunits. The ICs and LICs bind directly to the HC dimer and the LCs assemble on the IC dimer. DYNLT1 and DYNLT3 compete for association with dynein IC (DYNC1I1 or DYNC1I2). Self-associates. Interacts with DYNC1I1 and DYNC1I2. Interacts with BUB3. Interacts with SATB1 in nucleus to form complex with matrix attachment regions (MARs) of DNA.

The protein resides in the nucleus. Its subcellular location is the cytoplasm. It localises to the cytoskeleton. The protein localises to the chromosome. It is found in the centromere. The protein resides in the kinetochore. Its function is as follows. Acts as one of several non-catalytic accessory components of the cytoplasmic dynein 1 complex that are thought to be involved in linking dynein to cargos and to adapter proteins that regulate dynein function. Cytoplasmic dynein 1 acts as a motor for the intracellular retrograde motility of vesicles and organelles along microtubules. Probably binds BUB3 as part of transport cargo. Required for the efficient progression through mitosis. This chain is Dynein light chain Tctex-type 3 (Dynlt3), found in Mus musculus (Mouse).